Consider the following 279-residue polypeptide: Thymidylate synthase (279 aa).

133 to 134 is a dUMP binding site; that stretch reads RR. The active-site Nucleophile is cysteine 154. Residues 178–181, asparagine 189, and 219–221 each bind dUMP; these read RSND and HIY. Aspartate 181 lines the (6R)-5,10-methylene-5,6,7,8-tetrahydrofolate pocket. Alanine 278 contributes to the (6R)-5,10-methylene-5,6,7,8-tetrahydrofolate binding site.

Belongs to the thymidylate synthase family. Bacterial-type ThyA subfamily. As to quaternary structure, homodimer.

The protein localises to the cytoplasm. It carries out the reaction dUMP + (6R)-5,10-methylene-5,6,7,8-tetrahydrofolate = 7,8-dihydrofolate + dTMP. Its pathway is pyrimidine metabolism; dTTP biosynthesis. In terms of biological role, catalyzes the reductive methylation of 2'-deoxyuridine-5'-monophosphate (dUMP) to 2'-deoxythymidine-5'-monophosphate (dTMP) while utilizing 5,10-methylenetetrahydrofolate (mTHF) as the methyl donor and reductant in the reaction, yielding dihydrofolate (DHF) as a by-product. This enzymatic reaction provides an intracellular de novo source of dTMP, an essential precursor for DNA biosynthesis. This Streptococcus agalactiae serotype Ia (strain ATCC 27591 / A909 / CDC SS700) protein is Thymidylate synthase.